Here is a 550-residue protein sequence, read N- to C-terminus: Leucine-rich repeat LGI family member 2 (550 aa).

The N-terminal stretch at 1–25 (MALWRGGGALGLLLLSAACLIPPSA) is a signal peptide. One can recognise an LRRNT domain in the interval 26-62 (QVRRLARCPATCSCTKESIICVGSSWVPRIVPGDISS). An N-linked (GlcNAc...) asparagine glycan is attached at Asn-67. LRR repeat units lie at residues 83-104 (SLQL…AFAG) and 107-128 (HLEY…AFRG). One can recognise an LRRCT domain in the interval 140–190 (NKFECDCKAKWLYLWLKMTNSTVSDVLCIGPPEYQEKKLNEVTSFDYECTT). The N-linked (GlcNAc...) asparagine glycan is linked to Asn-159. EAR repeat units lie at residues 224–266 (DFVV…EWDH), 270–312 (NFRS…KYDE), 316–363 (KFVK…KWNS), 365–408 (GFYS…QWNK), 412–455 (KFVP…RWNS), 457–499 (QFVE…QWDK), and 503–545 (QFKK…EHII). Residue Asn-276 is glycosylated (N-linked (GlcNAc...) asparagine). An N-linked (GlcNAc...) asparagine glycan is attached at Asn-407.

Brain.

Its subcellular location is the secreted. Its function is as follows. Required for the development of soma-targeting inhibitory GABAergic synapses made by parvalbumin-positive basket cells. The chain is Leucine-rich repeat LGI family member 2 (Lgi2) from Mus musculus (Mouse).